The following is a 50-amino-acid chain: Temporin-SHb (50 aa).

The signal sequence occupies residues 1-10 (FLGTINLSLC). Residues 11–35 (EQERDADEEERRDEPDESDVEVEKR) constitute a propeptide that is removed on maturation. The segment at 12 to 31 (QERDADEEERRDEPDESDVE) is disordered. Over residues 14–30 (RDADEEERRDEPDESDV) the composition is skewed to acidic residues. L48 carries the post-translational modification Leucine amide.

Belongs to the frog skin active peptide (FSAP) family. Temporin subfamily. In terms of tissue distribution, expressed by the skin glands.

The protein resides in the secreted. In terms of biological role, amphipathic alpha-helical peptide with no antimicrobial activity. Does not display anti-leishmania activity. Does not show hemolytic activity (LC(50)&gt;116 uM). The chain is Temporin-SHb from Pelophylax saharicus (Sahara frog).